An 828-amino-acid polypeptide reads, in one-letter code: Toll-like receptor 4 (828 aa).

An N-terminal signal peptide occupies residues 1-23 (MMSASRLAGTLIPAMAFLSCVRP). The Extracellular portion of the chain corresponds to 24-629 (ESWEPCVVPN…SLNITCQMNK (606 aa)). An intrachain disulfide couples Cys29 to Cys38. Asn33 is a glycosylation site (N-linked (GlcNAc...) asparagine). 5 LRR repeats span residues 53-74 (STKN…SFFS), 77-98 (ELQV…AYQS), 101-122 (HLST…AFSG), 125-146 (SLQK…PIGH), and 149-170 (TLKE…EYFS). Residue Asn171 is glycosylated (N-linked (GlcNAc...) asparagine). LRR repeat units follow at residues 174-195 (NLEH…DLQV), 203-223 (NLSL…AFKE), and 225-245 (RLHK…KTCI). Asn203 is a glycosylation site (N-linked (GlcNAc...) asparagine). A disulfide bridge connects residues Cys279 and Cys304. 2 N-linked (GlcNAc...) asparagine glycosylation sites follow: Asn280 and Asn307. LRR repeat units lie at residues 372 to 392 (SLEF…CSQS), 398 to 420 (SLKY…LGLE), 421 to 442 (QLEH…SVFL), 446 to 454 (NLIYLDISH), 470 to 493 (SLKV…FTEL), 495 to 516 (NLTF…AFNS), 519 to 540 (SLQV…PYKC), and 543 to 563 (SLQV…QELQ). A disulfide bridge connects residues Cys388 and Cys389. N-linked (GlcNAc...) asparagine glycans are attached at residues Asn495 and Asn524. Asn573 carries N-linked (GlcNAc...) asparagine glycosylation. The LRRCT domain maps to 577–627 (NDFACTCEHQSFLQWIKDQRQLLVEVERMECATPSDKQGMPVLSLNITCQM). Cystine bridges form between Cys581–Cys607 and Cys583–Cys625. N-linked (GlcNAc...) asparagine glycans are attached at residues Asn622 and Asn628. A helical membrane pass occupies residues 630–650 (TVIGVSVFSVLVVSVVAVLVY). At 651–828 (KFYFHLMLLA…WNPEGTVGTG (178 aa)) the chain is on the cytoplasmic side. Residues 670–813 (NTYDAFVIYS…IFWRRLRKAL (144 aa)) form the TIR domain.

It belongs to the Toll-like receptor family. In terms of assembly, belongs to the lipopolysaccharide (LPS) receptor, a multi-protein complex containing at least CD14, LY96 and TLR4. Binding to bacterial LPS leads to homodimerization. Interacts with LY96 via the extracellular domain. Interacts with MYD88 and TIRAP via their respective TIR domains. Interacts with TICAM2. Interacts with NOX4. Interacts with CNPY3 and HSP90B1; this interaction is required for proper folding in the endoplasmic reticulum. Interacts with MAP3K21; this interaction leads to negative regulation of TLR4 signaling. Interacts with CD36, following CD36 stimulation by oxLDL or amyloid-beta 42, and forms a heterodimer with TLR6. The trimeric complex is internalized and triggers inflammatory response. LYN kinase activity facilitates TLR4-TLR6 heterodimerization and signal initiation. Interacts with TICAM1 in response to LPS in a WDFY1-dependent manner. Interacts with WDFY1 in response to LPS. Interacts with SMPDL3B. Interacts with CEACAM1; upon lipopolysaccharide stimulation, forms a complex including TLR4 and the phosphorylated form of SYK and CEACAM1, which in turn, recruits PTPN6 that dephosphorylates SYK, reducing the production of reactive oxygen species (ROS) and lysosome disruption, which in turn, reduces the activity of the inflammasome. Interacts with RFTN1; the interaction occurs in response to lipopolysaccharide stimulation. Interacts with SCIMP; the interaction occurs in response to lipopolysaccharide stimulation and is enhanced by phosphorylation of SCIMP by LYN. This interaction facilitates the phosphorylation of TLR4 by LYN which elicits a selective cytokine response in macrophages. Interacts with TRAF3IP3. Interacts with TREM1; this interaction enhances TLR4-mediated inflammatory response. Interacts with ZG16B/PAUF. Interacts with CD82; this interaction inhibits TLR4-mediated signaling pathway. In terms of processing, phosphorylated on tyrosine residues by LYN after binding lipopolysaccharide. Ubiquitinated by RNF128 via 'Lys-28'-linked polyubiquitin chains, leading to proteasomal degradation.

The protein localises to the cell membrane. Its subcellular location is the early endosome. It localises to the cell projection. It is found in the ruffle. Its function is as follows. Transmembrane receptor that functions as a pattern recognition receptor recognizing pathogen- and damage-associated molecular patterns (PAMPs and DAMPs) to induce innate immune responses via downstream signaling pathways. At the plasma membrane, cooperates with LY96 to mediate the innate immune response to bacterial lipopolysaccharide (LPS). Also involved in LPS-independent inflammatory responses triggered by free fatty acids, such as palmitate, and Ni(2+). Mechanistically, acts via MYD88, TIRAP and TRAF6, leading to NF-kappa-B activation, cytokine secretion and the inflammatory response. Alternatively, CD14-mediated TLR4 internalization via endocytosis is associated with the initiation of a MYD88-independent signaling via the TICAM1-TBK1-IRF3 axis leading to type I interferon production. In addition to the secretion of proinflammatory cytokines, initiates the activation of NLRP3 inflammasome and formation of a positive feedback loop between autophagy and NF-kappa-B signaling cascade. In complex with TLR6, promotes inflammation in monocytes/macrophages by associating with TLR6 and the receptor CD86. Upon ligand binding, such as oxLDL or amyloid-beta 42, the TLR4:TLR6 complex is internalized and triggers inflammatory response, leading to NF-kappa-B-dependent production of CXCL1, CXCL2 and CCL9 cytokines, via MYD88 signaling pathway, and CCL5 cytokine, via TICAM1 signaling pathway. In myeloid dendritic cells, vesicular stomatitis virus glycoprotein G but not LPS promotes the activation of IRF7, leading to type I IFN production in a CD14-dependent manner. The polypeptide is Toll-like receptor 4 (TLR4) (Pongo pygmaeus (Bornean orangutan)).